The sequence spans 359 residues: 3-dehydroquinate synthase (359 aa).

NAD(+) contacts are provided by residues 69–74 (DGEQHK), 103–107 (GVIGD), 127–128 (TT), lysine 140, lysine 149, and 167–170 (TLDT). 3 residues coordinate Zn(2+): glutamate 182, histidine 245, and histidine 262.

It belongs to the sugar phosphate cyclases superfamily. Dehydroquinate synthase family. Requires Co(2+) as cofactor. It depends on Zn(2+) as a cofactor. NAD(+) is required as a cofactor.

Its subcellular location is the cytoplasm. It carries out the reaction 7-phospho-2-dehydro-3-deoxy-D-arabino-heptonate = 3-dehydroquinate + phosphate. It functions in the pathway metabolic intermediate biosynthesis; chorismate biosynthesis; chorismate from D-erythrose 4-phosphate and phosphoenolpyruvate: step 2/7. In terms of biological role, catalyzes the conversion of 3-deoxy-D-arabino-heptulosonate 7-phosphate (DAHP) to dehydroquinate (DHQ). The protein is 3-dehydroquinate synthase of Nitrosococcus oceani (strain ATCC 19707 / BCRC 17464 / JCM 30415 / NCIMB 11848 / C-107).